Here is a 299-residue protein sequence, read N- to C-terminus: UDP-N-acetylenolpyruvoylglucosamine reductase (299 aa).

One can recognise an FAD-binding PCMH-type domain in the interval lysine 28–glycine 193. The active site involves arginine 172. Residue serine 222 is the Proton donor of the active site. Glutamate 292 is a catalytic residue.

This sequence belongs to the MurB family. FAD serves as cofactor.

It localises to the cytoplasm. The catalysed reaction is UDP-N-acetyl-alpha-D-muramate + NADP(+) = UDP-N-acetyl-3-O-(1-carboxyvinyl)-alpha-D-glucosamine + NADPH + H(+). Its pathway is cell wall biogenesis; peptidoglycan biosynthesis. Functionally, cell wall formation. The sequence is that of UDP-N-acetylenolpyruvoylglucosamine reductase from Lactococcus lactis subsp. cremoris (strain SK11).